A 308-amino-acid chain; its full sequence is Ribosomal RNA small subunit methyltransferase H (308 aa).

S-adenosyl-L-methionine contacts are provided by residues 35–37, Asp54, Phe80, Asp101, and Gln108; that span reads GGH.

It belongs to the methyltransferase superfamily. RsmH family.

Its subcellular location is the cytoplasm. It catalyses the reaction cytidine(1402) in 16S rRNA + S-adenosyl-L-methionine = N(4)-methylcytidine(1402) in 16S rRNA + S-adenosyl-L-homocysteine + H(+). Functionally, specifically methylates the N4 position of cytidine in position 1402 (C1402) of 16S rRNA. The sequence is that of Ribosomal RNA small subunit methyltransferase H from Mycoplasma pneumoniae (strain ATCC 29342 / M129 / Subtype 1) (Mycoplasmoides pneumoniae).